The following is a 437-amino-acid chain: Ribosomal protein uS12 methylthiotransferase RimO (437 aa).

The 111-residue stretch at 4 to 114 (PRVSFVSLGC…VMNAVHEVAP (111 aa)) folds into the MTTase N-terminal domain. [4Fe-4S] cluster contacts are provided by cysteine 13, cysteine 49, cysteine 78, cysteine 145, cysteine 149, and cysteine 152. Residues 131–369 (LTPRHYAYLK…MAKQQQISTN (239 aa)) form the Radical SAM core domain. A TRAM domain is found at 372–437 (KKKVGKRLPV…DAYDLHGTAV (66 aa)).

Belongs to the methylthiotransferase family. RimO subfamily. [4Fe-4S] cluster is required as a cofactor.

The protein resides in the cytoplasm. The catalysed reaction is L-aspartate(89)-[ribosomal protein uS12]-hydrogen + (sulfur carrier)-SH + AH2 + 2 S-adenosyl-L-methionine = 3-methylsulfanyl-L-aspartate(89)-[ribosomal protein uS12]-hydrogen + (sulfur carrier)-H + 5'-deoxyadenosine + L-methionine + A + S-adenosyl-L-homocysteine + 2 H(+). Its function is as follows. Catalyzes the methylthiolation of an aspartic acid residue of ribosomal protein uS12. In Brucella abortus (strain S19), this protein is Ribosomal protein uS12 methylthiotransferase RimO.